Consider the following 206-residue polypeptide: Small ribosomal subunit protein uS4 (206 aa).

The 64-residue stretch at 98–161 (RRLDNVVYRL…RSMELIKNNL (64 aa)) folds into the S4 RNA-binding domain.

Belongs to the universal ribosomal protein uS4 family. As to quaternary structure, part of the 30S ribosomal subunit. Contacts protein S5. The interaction surface between S4 and S5 is involved in control of translational fidelity.

Its function is as follows. One of the primary rRNA binding proteins, it binds directly to 16S rRNA where it nucleates assembly of the body of the 30S subunit. Functionally, with S5 and S12 plays an important role in translational accuracy. The polypeptide is Small ribosomal subunit protein uS4 (Caldanaerobacter subterraneus subsp. tengcongensis (strain DSM 15242 / JCM 11007 / NBRC 100824 / MB4) (Thermoanaerobacter tengcongensis)).